We begin with the raw amino-acid sequence, 958 residues long: Structure-specific endonuclease subunit SLX4 (958 aa).

Disordered stretches follow at residues 89–123, 183–209, 326–400, 531–589, 594–613, and 655–849; these read AESPIKSGVEGPTLPLGGDKKKPRTAGARKKKGKT, QKKAETVSRHFTPHTSAPPELVAGPID, LATA…LSPT, DLTI…EQHQ, QSNTPQQPQPAPPPPPSFEL, and STAA…SPPA. Residues 109-121 show a composition bias toward basic residues; it reads KKPRTAGARKKKG. Basic and acidic residues predominate over residues 332–341; it reads RRPEEAERST. A compositionally biased stretch (polar residues) spans 342-351; it reads LSRQQDTHIP. Over residues 364–373 the composition is skewed to low complexity; the sequence is AASKSASAKP. Over residues 374 to 389 the composition is skewed to basic residues; that stretch reads KAAKKAPKPRATKKKQ. Positions 600-610 are enriched in pro residues; that stretch reads QPQPAPPPPPS. 3 stretches are compositionally biased toward low complexity: residues 655–666, 775–787, and 821–838; these read STAAQAAMSTSA, TTSPATRATRAKA, and PDSGSDDPFASSAPSSPD.

It belongs to the SLX4 family. Forms a heterodimer with SLX1. Post-translationally, phosphorylated in response to DNA damage.

The protein localises to the nucleus. In terms of biological role, regulatory subunit of the SLX1-SLX4 structure-specific endonuclease that resolves DNA secondary structures generated during DNA repair and recombination. Has endonuclease activity towards branched DNA substrates, introducing single-strand cuts in duplex DNA close to junctions with ss-DNA. This chain is Structure-specific endonuclease subunit SLX4, found in Chaetomium globosum (strain ATCC 6205 / CBS 148.51 / DSM 1962 / NBRC 6347 / NRRL 1970) (Soil fungus).